Reading from the N-terminus, the 270-residue chain is Phosphatidylglycerol--prolipoprotein diacylglyceryl transferase (270 aa).

7 helical membrane passes run 10–30, 56–76, 92–112, 120–140, 175–195, 202–222, and 237–257; these read VAVA…LVGI, LIFW…VLFY, WKGG…AWWF, FFQL…AGRI, SQLY…NLYA, MAVS…VEFV, and VTMG…LIWL. A 1,2-diacyl-sn-glycero-3-phospho-(1'-sn-glycerol) is bound at residue R139.

Belongs to the Lgt family.

The protein localises to the cell inner membrane. The enzyme catalyses L-cysteinyl-[prolipoprotein] + a 1,2-diacyl-sn-glycero-3-phospho-(1'-sn-glycerol) = an S-1,2-diacyl-sn-glyceryl-L-cysteinyl-[prolipoprotein] + sn-glycerol 1-phosphate + H(+). It functions in the pathway protein modification; lipoprotein biosynthesis (diacylglyceryl transfer). In terms of biological role, catalyzes the transfer of the diacylglyceryl group from phosphatidylglycerol to the sulfhydryl group of the N-terminal cysteine of a prolipoprotein, the first step in the formation of mature lipoproteins. The polypeptide is Phosphatidylglycerol--prolipoprotein diacylglyceryl transferase (Pseudomonas syringae pv. syringae (strain B728a)).